The following is a 571-amino-acid chain: Probable pectinesterase/pectinesterase inhibitor 58 (571 aa).

An N-terminal signal peptide occupies residues 1 to 28 (MGVDGELKKKKCIIAGVITALLVLMVVA). 4 N-linked (GlcNAc...) asparagine glycosylation sites follow: asparagine 36, asparagine 91, asparagine 207, and asparagine 216. Residues 49–204 (KTATTAVEAV…RELTSNGLAM (156 aa)) are pectinesterase inhibitor 58. Residues 259-556 (NVVVAHDGSG…FTPARFLRGN (298 aa)) are pectinesterase 58. Position 335 (threonine 335) interacts with substrate. The N-linked (GlcNAc...) asparagine glycan is linked to asparagine 347. Glutamine 365 contributes to the substrate binding site. Aspartate 388 acts as the Proton donor; for pectinesterase activity in catalysis. A disulfide bridge links cysteine 402 with cysteine 422. Catalysis depends on aspartate 409, which acts as the Nucleophile; for pectinesterase activity. Substrate contacts are provided by arginine 477 and tryptophan 479.

The protein in the N-terminal section; belongs to the PMEI family. It in the C-terminal section; belongs to the pectinesterase family. In terms of tissue distribution, expressed in siliques, but not in flower buds.

It localises to the secreted. Its subcellular location is the cell wall. The catalysed reaction is [(1-&gt;4)-alpha-D-galacturonosyl methyl ester](n) + n H2O = [(1-&gt;4)-alpha-D-galacturonosyl](n) + n methanol + n H(+). Its pathway is glycan metabolism; pectin degradation; 2-dehydro-3-deoxy-D-gluconate from pectin: step 1/5. Functionally, acts in the modification of cell walls via demethylesterification of cell wall pectin. The protein is Probable pectinesterase/pectinesterase inhibitor 58 (PME58) of Arabidopsis thaliana (Mouse-ear cress).